A 362-amino-acid chain; its full sequence is Phosphoserine aminotransferase (362 aa).

L-glutamate is bound by residues S9 and R42. Residues 76-77 (GR), W102, T153, D174, and Q197 each bind pyridoxal 5'-phosphate. Position 198 is an N6-(pyridoxal phosphate)lysine (K198). Position 239–240 (239–240 (NT)) interacts with pyridoxal 5'-phosphate.

This sequence belongs to the class-V pyridoxal-phosphate-dependent aminotransferase family. SerC subfamily. Homodimer. Pyridoxal 5'-phosphate serves as cofactor.

It is found in the cytoplasm. The enzyme catalyses O-phospho-L-serine + 2-oxoglutarate = 3-phosphooxypyruvate + L-glutamate. It catalyses the reaction 4-(phosphooxy)-L-threonine + 2-oxoglutarate = (R)-3-hydroxy-2-oxo-4-phosphooxybutanoate + L-glutamate. The protein operates within amino-acid biosynthesis; L-serine biosynthesis; L-serine from 3-phospho-D-glycerate: step 2/3. Its pathway is cofactor biosynthesis; pyridoxine 5'-phosphate biosynthesis; pyridoxine 5'-phosphate from D-erythrose 4-phosphate: step 3/5. Its function is as follows. Catalyzes the reversible conversion of 3-phosphohydroxypyruvate to phosphoserine and of 3-hydroxy-2-oxo-4-phosphonooxybutanoate to phosphohydroxythreonine. The sequence is that of Phosphoserine aminotransferase from Escherichia coli O127:H6 (strain E2348/69 / EPEC).